A 207-amino-acid chain; its full sequence is Holliday junction branch migration complex subunit RuvA (207 aa).

A domain I region spans residues 1-63 (MISSLRGTVL…EDSLQLFGFS (63 aa)). A domain II region spans residues 64 to 142 (GLEQLQVFEL…ACRRPSAPSA (79 aa)). The interval 142 to 146 (ARRPS) is flexible linker. Residues 147–207 (APSSVSDSVL…RLGPANQAAR (61 aa)) are domain III.

It belongs to the RuvA family. Homotetramer. Forms an RuvA(8)-RuvB(12)-Holliday junction (HJ) complex. HJ DNA is sandwiched between 2 RuvA tetramers; dsDNA enters through RuvA and exits via RuvB. An RuvB hexamer assembles on each DNA strand where it exits the tetramer. Each RuvB hexamer is contacted by two RuvA subunits (via domain III) on 2 adjacent RuvB subunits; this complex drives branch migration. In the full resolvosome a probable DNA-RuvA(4)-RuvB(12)-RuvC(2) complex forms which resolves the HJ.

It localises to the cytoplasm. Functionally, the RuvA-RuvB-RuvC complex processes Holliday junction (HJ) DNA during genetic recombination and DNA repair, while the RuvA-RuvB complex plays an important role in the rescue of blocked DNA replication forks via replication fork reversal (RFR). RuvA specifically binds to HJ cruciform DNA, conferring on it an open structure. The RuvB hexamer acts as an ATP-dependent pump, pulling dsDNA into and through the RuvAB complex. HJ branch migration allows RuvC to scan DNA until it finds its consensus sequence, where it cleaves and resolves the cruciform DNA. In Leifsonia xyli subsp. xyli (strain CTCB07), this protein is Holliday junction branch migration complex subunit RuvA.